Consider the following 831-residue polypeptide: Periplasmic nitrate reductase (831 aa).

The segment at residues 1–31 (MTISRRDLLKAQAAGIAAMAANIPLSSQAPA) is a signal peptide (tat-type signal). The 4Fe-4S Mo/W bis-MGD-type domain occupies 41-97 (ITWSKAPCRFCGTGCGVMVGVKEGRVVATHGDLLAEVNRGLNCVKGYFLSKIMYGAD). Residues Cys48, Cys51, Cys55, and Cys83 each coordinate [4Fe-4S] cluster. Mo-bis(molybdopterin guanine dinucleotide) is bound by residues Lys85, Gln152, Asn177, Cys181, 214-221 (WGSNMAEM), 245-249 (STFTH), 264-266 (GTD), Met375, Gln379, Asn485, 511-512 (SD), Lys534, Asp561, and 721-730 (TGRVLEHWHS). Trp797 is a substrate binding site. Asn805 and Lys822 together coordinate Mo-bis(molybdopterin guanine dinucleotide).

This sequence belongs to the prokaryotic molybdopterin-containing oxidoreductase family. NasA/NapA/NarB subfamily. Component of the periplasmic nitrate reductase NapAB complex composed of NapA and NapB. [4Fe-4S] cluster serves as cofactor. The cofactor is Mo-bis(molybdopterin guanine dinucleotide). Predicted to be exported by the Tat system. The position of the signal peptide cleavage has not been experimentally proven.

Its subcellular location is the periplasm. The catalysed reaction is 2 Fe(II)-[cytochrome] + nitrate + 2 H(+) = 2 Fe(III)-[cytochrome] + nitrite + H2O. Its function is as follows. Catalytic subunit of the periplasmic nitrate reductase complex NapAB. Receives electrons from NapB and catalyzes the reduction of nitrate to nitrite. In Paracoccus pantotrophus (Thiosphaera pantotropha), this protein is Periplasmic nitrate reductase.